We begin with the raw amino-acid sequence, 2273 residues long: KGKTITHGQSWGARRIHSHFYITIFTITCIRIGQYKLALYLDPYRFYNITGSQIVRLKGQRPEYRKRIFAHSYRHSSRIGLNFPSRRRYSNYVDRGNIHKHTRLPPQFIGLNTVESAQPSILRDFVDLRGGHTVISKILIANNGIAAVKEMRSIRKWAYETFNDEKIIQFVVMATPDDLHANSEYIRMADQYVQVPGGTNNNNYANIDLILDVAEQTDVDAVWAGWGHASENPCLPELLASSQRKILFIGPPGRAMRSLGDKISSTIVAQSAKIPCIPWSGSHIDTIHIDNKTNFVSVPDDVYVRGCCSSPEDALEKAKLIGFPVMIKASEGGGGKGIRRVDNEDDFIALYRQAVNETPGSPMFVMKVVTDARHLEVQLLADQYGTNITLFGRDCSIQRRHQKIIEEAPVTITKPETFQRMERAAIRLGELVGYVSAGTVEYLYSPKDDKFYFLELNPRLQVEHPTTEMISGVNLPATQLQIAMGIPMHMISDIRKLYGLDPTGTSYIDFKNLKRPSPKGHCISCRITSEDPNEGFKPSTGKIHELNFRSSSNVWGYFSVGNNGAIHSFSDSQFGHIFAVGNDRQDAKQNMVLALKDFSIRGEFKTPIEYLIELLETRDFESNNISTGWLDDLILKNLSSDSKLDPTLAIICGAAMKAYVFTEKVRNKYLELLRRGQVPPKDFLKTKFPVDFIFDNNRYLFNVAQSSEEQFILSINKSQCEVNVQKLSSDCLLISVDGKCHTVYWKDDIRGTRLSIDSNTIFLEAELNPTQVISPTPGKLVKYLVRSGDHVFAGQQYAEIEIMKMQMPLVAKSDGVIELLRQPGSIIEAGDVIAKLTLDSPSKANESSLYRGELPVLGPPLIEGSRPNHKLRVLINRLENILNGYHENSGIETTLKELIKILRDGRLPYSEWDSQISTVRNRLPRQLNEGLGNLVKKSVSFPAKELHKLMKRYLEENTNDHVVYVALQPLLKISERYSEGLANHECEIFLKLIKKYYAVEKIFENHDIHEERNLLNLRRKDLTNLKKILCISLSHANVVAKNKLVTAILHEYEPLCQDSSKMSLKFRAVIHDLASLESKWAKEVAVKARSVLLRGIFPPIKKRKEHIKTLLQLHIKDTGAENIHSRNIYSCMRDFGNLIHSNLIQLQDLFFFFGHQDTALSSIASEIYARYAYGNYQLKSIKIHKGAPDLLMSWQFSSLRNYLVNSDGESDEFTKLSKPPSTSGKSSANSFGLLVNMRALESLEKTLDEVYEQIHIPEERLSSGENSLIVNILSPIRYRSENDLIKTLKIKLHENERGLSKLKVNRITFAFIAANAPAVKFYSFDGTTYDEISQIRNMDPSYEAPLELGKMSNYKIRSLPTYDSSIRIFEGISKFTPLDKRFFVRKIINSFMYNDQKTTEENLKAEINAQVVYMLEHLGAVDISNSDLNHIFLSFNTVLNIPVHRLEEIVSTILKTHETRLFQERITDVEICISVECLETKKPAPLRLLISNKSGYVVKIETYYEKIGKNGNLILEPCSEQSHYSQKSLSLPYSVKDWLQPKRYKAQFMGTTYVYDFPGLFHQAAIQQWKRYFPKHKLNDSFFSWVELIEQNGNLIKVNREPGLNNIGMVAFEIMVQTPEYPEGRNMIVISNDITYNIGSFGPREDLFFDRVTNYARERGIPRIYLAANSGAKLGIAEELIPLFRVAWNDPSDPTKGFQYLYLAPKDMQLLKDSGKGNSVVVEHKMVYGEERYIIKAIVGFEEGLGVECLQGSGLIAGATSKAYRDIFTITAVTCRSVGIGSYLVRLGQRTIQVEDKPIILTGASAINKVLGTDIYTSNLQIGGTQIMYKNGIAHLTASNDMKAIEKIMTWLSYVPAKRDMSPPLLETMDRWDRDVDFKPAKQVPYEARWLIEGKWDSNNNFQSGLFDKDSFFETLSGWAKGVIVGRARLGGIPVGVIAVETKTIEEIIPADPANLDSSEFSVKEAGQVWYPNSAFKTAQTINDFNYGEQLPLIILANWRGFSGGQRDMYNEVLKYGSFIVDALVDYKQPILIYIPPFGELRGGSWVVIDPTINPEQMEMYADVESRGGVLEPDGVVSIKYRKEKMIETMIRLDSTYGHLRRTLTEKKLSLEKQNDLTKRLKIRERQLIPIYNQISIQFADLHDRSTRMLVKGVIRNELEWKKSRRFLYWRLRRRLNEGQVIKRLQKKTCDNKTKMKYDDLLKIVQSWYNDLDVNDDRAVVEFIERNSKKIDKNIEEFEISLLIDELKKKFEDRRGNIVLEELTRLVDSKRKR.

The transit peptide at 1 to 104 (KGKTITHGQS…RGNIHKHTRL (104 aa)) directs the protein to the mitochondrion. A Biotin carboxylation domain is found at 134 to 635 (VISKILIANN…STGWLDDLIL (502 aa)). In terms of domain architecture, ATP-grasp spans 292–484 (KTNFVSVPDD…LPATQLQIAM (193 aa)). An ATP-binding site is contributed by 332–337 (GGGGKG). R459 is a catalytic residue. Residues 763–837 (LEAELNPTQV…EAGDVIAKLT (75 aa)) form the Biotinyl-binding domain. K804 carries the post-translational modification N6-biotinyllysine. A CoA carboxyltransferase N-terminal domain is found at 1532-1867 (PYSVKDWLQP…KRDMSPPLLE (336 aa)). A carboxyltransferase region spans residues 1532–2187 (PYSVKDWLQP…EGQVIKRLQK (656 aa)). CoA contacts are provided by R1776, K2080, and R2082. Positions 1871-2187 (RWDRDVDFKP…EGQVIKRLQK (317 aa)) constitute a CoA carboxyltransferase C-terminal domain.

The cofactor is biotin.

The protein resides in the mitochondrion. The enzyme catalyses hydrogencarbonate + acetyl-CoA + ATP = malonyl-CoA + ADP + phosphate + H(+). The catalysed reaction is N(6)-biotinyl-L-lysyl-[protein] + hydrogencarbonate + ATP = N(6)-carboxybiotinyl-L-lysyl-[protein] + ADP + phosphate + H(+). It functions in the pathway lipid metabolism; malonyl-CoA biosynthesis; malonyl-CoA from acetyl-CoA: step 1/1. Its function is as follows. Catalyzes the rate-limiting reaction in the mitochondrial fatty acid synthesis (FAS) type II pathway. Responsible for the production of the mitochondrial malonyl-CoA, used for the biosynthesis of the cofactor lipoic acid. This protein carries three functions: biotin carboxyl carrier protein, biotin carboxylase, and carboxyltransferase. The protein is Acetyl-CoA carboxylase, mitochondrial (HFA1) of Saccharomyces cerevisiae (strain ATCC 204508 / S288c) (Baker's yeast).